Reading from the N-terminus, the 411-residue chain is 3-phosphoshikimate 1-carboxyvinyltransferase (411 aa).

K20, S21, and R25 together coordinate 3-phosphoshikimate. Phosphoenolpyruvate is bound at residue K20. 2 residues coordinate phosphoenolpyruvate: G86 and R114. Positions 156, 157, 158, 181, 295, and 322 each coordinate 3-phosphoshikimate. Q158 provides a ligand contact to phosphoenolpyruvate. The active-site Proton acceptor is D295. Residues R326, R367, and K393 each contribute to the phosphoenolpyruvate site.

It belongs to the EPSP synthase family. In terms of assembly, monomer.

The protein resides in the cytoplasm. The catalysed reaction is 3-phosphoshikimate + phosphoenolpyruvate = 5-O-(1-carboxyvinyl)-3-phosphoshikimate + phosphate. It functions in the pathway metabolic intermediate biosynthesis; chorismate biosynthesis. Its function is as follows. Catalyzes the transfer of the enolpyruvyl moiety of phosphoenolpyruvate (PEP) to the 5-hydroxyl of shikimate-3-phosphate (S3P) to produce enolpyruvyl shikimate-3-phosphate and inorganic phosphate. The polypeptide is 3-phosphoshikimate 1-carboxyvinyltransferase (Picrophilus torridus (strain ATCC 700027 / DSM 9790 / JCM 10055 / NBRC 100828 / KAW 2/3)).